Consider the following 259-residue polypeptide: uncharacterized protein (259 aa).

This is an uncharacterized protein from Methanocaldococcus jannaschii (strain ATCC 43067 / DSM 2661 / JAL-1 / JCM 10045 / NBRC 100440) (Methanococcus jannaschii).